The following is a 404-amino-acid chain: Proteasomal ubiquitin receptor ADRM1-A (404 aa).

A Pru domain is found at 17–130 (SSSKYLVEFR…RKLNEYLNNP (114 aa)). Low complexity predominate over residues 195–247 (GSGGPTTSSSSSSSRSQSAAVTPSSTTSSTRTTSAPVAPAAAPATTPSPAVSS). Disordered regions lie at residues 195–258 (GSGG…TSPT) and 376–404 (FAKAMQSTSSQKERESSEKKEEEEDMSLD). Polar residues predominate over residues 248–258 (NDGASEATSPT). Residues 278–390 (TGEGGQQVDL…QSTSSQKERE (113 aa)) form the DEUBAD domain. The segment covering 386–395 (QKERESSEKK) has biased composition (basic and acidic residues).

It belongs to the ADRM1 family. Component of the 19S proteasome regulatory particle complex. The 26S proteasome consists of a 20S core particle (CP) and two 19S regulatory subunits (RP).

It is found in the cytoplasm. It localises to the nucleus. Its function is as follows. Component of the 26S proteasome, a multiprotein complex involved in the ATP-dependent degradation of ubiquitinated proteins. This complex plays a key role in the maintenance of protein homeostasis by removing misfolded or damaged proteins, which could impair cellular functions, and by removing proteins whose functions are no longer required. Therefore, the proteasome participates in numerous cellular processes, including cell cycle progression, apoptosis, or DNA damage repair. Within the complex, functions as a proteasomal ubiquitin receptor. The protein is Proteasomal ubiquitin receptor ADRM1-A (adrm1-a) of Xenopus laevis (African clawed frog).